A 315-amino-acid polypeptide reads, in one-letter code: Ribosomal RNA small subunit methyltransferase H (315 aa).

Residues 37–39, Asp-57, Leu-91, Asp-105, and Gln-112 each bind S-adenosyl-L-methionine; that span reads GGH.

This sequence belongs to the methyltransferase superfamily. RsmH family.

Its subcellular location is the cytoplasm. The catalysed reaction is cytidine(1402) in 16S rRNA + S-adenosyl-L-methionine = N(4)-methylcytidine(1402) in 16S rRNA + S-adenosyl-L-homocysteine + H(+). Functionally, specifically methylates the N4 position of cytidine in position 1402 (C1402) of 16S rRNA. This Syntrophus aciditrophicus (strain SB) protein is Ribosomal RNA small subunit methyltransferase H.